Here is a 253-residue protein sequence, read N- to C-terminus: Glucosamine-6-phosphate deaminase (253 aa).

D65 (proton acceptor; for enolization step) is an active-site residue. N133 (for ring-opening step) is an active-site residue. H135 serves as the catalytic Proton acceptor; for ring-opening step. The For ring-opening step role is filled by E140.

This sequence belongs to the glucosamine/galactosamine-6-phosphate isomerase family. NagB subfamily.

It catalyses the reaction alpha-D-glucosamine 6-phosphate + H2O = beta-D-fructose 6-phosphate + NH4(+). It participates in amino-sugar metabolism; N-acetylneuraminate degradation; D-fructose 6-phosphate from N-acetylneuraminate: step 5/5. Catalyzes the reversible isomerization-deamination of glucosamine 6-phosphate (GlcN6P) to form fructose 6-phosphate (Fru6P) and ammonium ion. In Corynebacterium efficiens (strain DSM 44549 / YS-314 / AJ 12310 / JCM 11189 / NBRC 100395), this protein is Glucosamine-6-phosphate deaminase.